A 1487-amino-acid polypeptide reads, in one-letter code: Secretory phospholipase A2 receptor (1487 aa).

Positions 1 to 26 (MVQWLAMLQLLWLQQLLLLGIHQGIA) are cleaved as a signal peptide. Topologically, residues 27 to 1396 (QDLTHIQEPS…AQPEKGLSHS (1370 aa)) are extracellular. Residues 42–165 (KGIFIIQSES…SSGGDICEHP (124 aa)) form the Ricin B-type lectin domain. Disulfide bonds link Cys-55-Cys-68, Cys-93-Cys-110, Cys-181-Cys-207, and Cys-195-Cys-222. Residue Asn-97 is glycosylated (N-linked (GlcNAc...) asparagine). The Fibronectin type-II domain maps to 176 to 224 (AHGMPCVFPFQFKGHWHHDCIREGQKEHLLWCATTSRYEEDEKWGFCPD). N-linked (GlcNAc...) asparagine glycosylation occurs at Asn-239. C-type lectin domains lie at 241–357 (SSRI…YICK), 387–504 (FNRK…YICK), 524–643 (HGRF…MSLC), 673–797 (GLAS…WICR), 819–938 (YQNA…SICK), and 964–1095 (FNYK…GFVC). Cystine bridges form between Cys-263-Cys-356, Cys-333-Cys-348, Cys-408-Cys-503, Cys-480-Cys-495, Cys-617-Cys-634, Cys-699-Cys-796, Cys-774-Cys-788, Cys-840-Cys-937, Cys-914-Cys-929, and Cys-1066-Cys-1086. An N-linked (GlcNAc...) asparagine glycan is attached at Asn-928. N-linked (GlcNAc...) asparagine glycans are attached at residues Asn-1107, Asn-1122, and Asn-1131. 2 consecutive C-type lectin domains span residues 1120–1231 (YGNR…GAIC) and 1256–1377 (FKGN…FICK). Disulfide bonds link Cys-1208–Cys-1222, Cys-1279–Cys-1376, and Cys-1353–Cys-1368. The chain crosses the membrane as a helical span at residues 1397–1417 (IVPVTVTLTLIIALGIFMLCF). The Cytoplasmic portion of the chain corresponds to 1418–1487 (WIYKQKSDIF…HKGRPICISP (70 aa)). The short motif at 1435–1441 (GSYYPTL) is the Endocytosis signal element. The segment covering 1463–1475 (DEEVRDAPATESK) has biased composition (basic and acidic residues). Residues 1463–1487 (DEEVRDAPATESKRGHKGRPICISP) form a disordered region.

Interacts with sPLA2-IB/PLA2G1B; this interaction mediates intracellular signaling as well as clearance of extracellular sPLA2-IB/PLA2G1B via endocytotic pathway. Interacts with sPLA2-X/PLA2G10; this interaction mediates sPLA2-X/PLA2G10 clearance and inactivation. In terms of processing, the secretory phospholipase A2 receptor form may be produced by the action of metalloproteinases. It contains all extracellular domains and only lacks transmembrane and cytosolic regions. It is however unclear whether this form is produced by proteolytic cleavage as suggested by some experiments reported by PubMed:11830583, or by alternative splicing. Widely expressed. Present in type II alveolar epithelial cells and a subset of splenic lymphocytes. Present at the surface of polymorphonuclear neutrophils (at protein level).

The protein resides in the cell membrane. Its subcellular location is the secreted. Its function is as follows. Receptor for secretory phospholipase A2 (sPLA2). Acts as a receptor for phospholipases sPLA2-IB/PLA2G1B, sPLA2-X/PLA2G10 and, with lower affinity, sPLA2-IIA/PLA2G2A. Also able to bind to snake PA2-like toxins. Although its precise function remains unclear, binding of sPLA2 to its receptor participates in both positive and negative regulation of sPLA2 functions as well as clearance of sPLA2. Binding of sPLA2-IB/PLA2G1B induces various effects depending on the cell type, such as activation of the mitogen-activated protein kinase (MAPK) cascade to induce cell proliferation, the production of lipid mediators, selective release of arachidonic acid in bone marrow-derived mast cells. In neutrophils, binding of sPLA2-IB/PLA2G1B can activate p38 MAPK to stimulate elastase release and cell adhesion. May be involved in responses in pro-inflammatory cytokine productions during endotoxic shock. Also has endocytic properties and rapidly internalizes sPLA2 ligands, which is particularly important for the clearance of extracellular sPLA2s to protect their potent enzymatic activities. The soluble secretory phospholipase A2 receptor form is circulating and acts as a negative regulator of sPLA2 functions by blocking the biological functions of sPLA2-IB/PLA2G1B and sPLA2-X/PLA2G10. In podocytes, binding of sPLA2-IB/PLA2G1B can regulate podocyte survival and glomerular homeostasis. The polypeptide is Secretory phospholipase A2 receptor (Pla2r1) (Mus musculus (Mouse)).